The sequence spans 251 residues: Pyrroloquinoline-quinone synthase (251 aa).

Belongs to the PqqC family.

The catalysed reaction is 6-(2-amino-2-carboxyethyl)-7,8-dioxo-1,2,3,4,7,8-hexahydroquinoline-2,4-dicarboxylate + 3 O2 = pyrroloquinoline quinone + 2 H2O2 + 2 H2O + H(+). It functions in the pathway cofactor biosynthesis; pyrroloquinoline quinone biosynthesis. Ring cyclization and eight-electron oxidation of 3a-(2-amino-2-carboxyethyl)-4,5-dioxo-4,5,6,7,8,9-hexahydroquinoline-7,9-dicarboxylic-acid to PQQ. This chain is Pyrroloquinoline-quinone synthase, found in Pseudomonas syringae pv. tomato (strain ATCC BAA-871 / DC3000).